Consider the following 418-residue polypeptide: Light-independent protochlorophyllide reductase subunit N (418 aa).

C17, C42, and C103 together coordinate [4Fe-4S] cluster.

Belongs to the BchN/ChlN family. Protochlorophyllide reductase is composed of three subunits; ChlL, ChlN and ChlB. Forms a heterotetramer of two ChlB and two ChlN subunits. The cofactor is [4Fe-4S] cluster.

The enzyme catalyses chlorophyllide a + oxidized 2[4Fe-4S]-[ferredoxin] + 2 ADP + 2 phosphate = protochlorophyllide a + reduced 2[4Fe-4S]-[ferredoxin] + 2 ATP + 2 H2O. The protein operates within porphyrin-containing compound metabolism; chlorophyll biosynthesis (light-independent). In terms of biological role, component of the dark-operative protochlorophyllide reductase (DPOR) that uses Mg-ATP and reduced ferredoxin to reduce ring D of protochlorophyllide (Pchlide) to form chlorophyllide a (Chlide). This reaction is light-independent. The NB-protein (ChlN-ChlB) is the catalytic component of the complex. This is Light-independent protochlorophyllide reductase subunit N from Prochlorococcus marinus (strain NATL2A).